Consider the following 289-residue polypeptide: MSTYLIGDIHGCLDELLALLAQVNFDPQQDTLWLTGDLVARGPASLDVLRYVRSLGPAVRMVLGNHDLHLLAVYAGISRNKPKDRITPLLDAPDADELINWLRRQPVLQVDDQLKLIMAHAGITPQWDIETAQMCAREVEAVLSSDSYPLFLDAMYGDMPNNWSPELTGLARLRFSTNALTRMRFCFPNGQLDMICKDTPENAPAPLKPWFDLPRLVDPEYSIIFGHWASLEGKGVPEGIYGLDTGCCWGGDLTLLRWEDKRYFTQRAFKAEAEINNNNGFAAGEEVQH.

The protein belongs to the Ap4A hydrolase family.

The enzyme catalyses P(1),P(4)-bis(5'-adenosyl) tetraphosphate + H2O = 2 ADP + 2 H(+). Its function is as follows. Hydrolyzes diadenosine 5',5'''-P1,P4-tetraphosphate to yield ADP. The protein is Bis(5'-nucleosyl)-tetraphosphatase, symmetrical of Yersinia pseudotuberculosis serotype O:3 (strain YPIII).